A 230-amino-acid chain; its full sequence is Secretory carrier-associated membrane protein 4 (230 aa).

The Cytoplasmic portion of the chain corresponds to 1–39 (MAGKENNFPPLPHFLPLKPCFYQDFSDEIPVEHQVLVKR). 4 consecutive transmembrane segments (helical) span residues 40 to 60 (IYRLWMFYCTTLGVNLVACLA), 61 to 81 (WWIAGGAGANFGLAMLWLVLF), 106 to 126 (MAFFFIFGAQFVLTVIQAIGF), and 149 to 169 (VVMLIPAIMFSLSAVVMAITI). At 170–230 (VKVHRIYRGA…SYSTSGSQWP (61 aa)) the chain is on the cytoplasmic side. Residue T194 is modified to Phosphothreonine. The disordered stretch occupies residues 197-230 (NPPSREAQFNSFSGNSLPEYPTVPSYSTSGSQWP). Composition is skewed to polar residues over residues 203–212 (AQFNSFSGNS) and 220–230 (PSYSTSGSQWP).

This sequence belongs to the SCAMP family.

The protein resides in the membrane. Functionally, probably involved in membrane protein trafficking. This Rattus norvegicus (Rat) protein is Secretory carrier-associated membrane protein 4 (Scamp4).